Reading from the N-terminus, the 244-residue chain is Small ribosomal subunit protein eS4 (244 aa).

Basic residues predominate over residues Met1 to Pro14. The tract at residues Met1–Pro36 is disordered. Polar residues predominate over residues Trp19–Pro32. Residues Leu43–Glu106 enclose the S4 RNA-binding domain.

It belongs to the eukaryotic ribosomal protein eS4 family.

This chain is Small ribosomal subunit protein eS4, found in Methanococcus aeolicus (strain ATCC BAA-1280 / DSM 17508 / OCM 812 / Nankai-3).